The primary structure comprises 300 residues: Ribosomal RNA small subunit methyltransferase H (300 aa).

S-adenosyl-L-methionine-binding positions include 33–35 (GGH), Asp-52, Phe-79, Asp-100, and Gln-107.

It belongs to the methyltransferase superfamily. RsmH family.

It localises to the cytoplasm. It catalyses the reaction cytidine(1402) in 16S rRNA + S-adenosyl-L-methionine = N(4)-methylcytidine(1402) in 16S rRNA + S-adenosyl-L-homocysteine + H(+). In terms of biological role, specifically methylates the N4 position of cytidine in position 1402 (C1402) of 16S rRNA. The polypeptide is Ribosomal RNA small subunit methyltransferase H (Mycoplasmopsis agalactiae (strain NCTC 10123 / CIP 59.7 / PG2) (Mycoplasma agalactiae)).